Consider the following 311-residue polypeptide: Olfactory receptor 2Y1 (311 aa).

The Extracellular portion of the chain corresponds to 1-25 (MGSFNTSFEDGFILVGFSDWPQLEP). The N-linked (GlcNAc...) asparagine glycan is linked to asparagine 5. The helical transmembrane segment at 26–49 (ILFVFIFIFYSLTLFGNTIIIALS) threads the bilayer. Residues 50–57 (WLDLRLHT) are Cytoplasmic-facing. Residues 58–79 (PMYFFLSHLSLLDLCFTTSTVP) form a helical membrane-spanning segment. Topologically, residues 80–100 (QLLINLCGVDRTITRGGCVAQ) are extracellular. Cysteine 97 and cysteine 188 are joined by a disulfide. The helical transmembrane segment at 101 to 120 (LFIYLALGSTECVLLVVMAF) threads the bilayer. Over 121-139 (DRYAAVCRPLHYMAIMHPH) the chain is Cytoplasmic. Residues 140–158 (LCQTLAIASWGAGFVNSLI) traverse the membrane as a helical segment. Topologically, residues 159–194 (QTGLAMAMPLCGHRLNHFFCEMPVFLKLACADTEGT) are extracellular. The chain crosses the membrane as a helical span at residues 195–218 (EAKMFVARVIVVAVPAALILGSYV). At 219–235 (HIAHAVLRVKSTAGRRK) the chain is on the cytoplasmic side. A helical membrane pass occupies residues 236–258 (AFGTCGSHLLVVFLFYGSAIYTY). Residues 259-271 (LQSIHNYSEREGK) are Extracellular-facing. Asparagine 264 is a glycosylation site (N-linked (GlcNAc...) asparagine). The chain crosses the membrane as a helical span at residues 272–291 (FVALFYTIITPILNPLIYTL). Over 292 to 311 (RNKDVKGALWKVLWRGRDSG) the chain is Cytoplasmic.

Belongs to the G-protein coupled receptor 1 family.

Its subcellular location is the cell membrane. Functionally, odorant receptor. This Homo sapiens (Human) protein is Olfactory receptor 2Y1 (OR2Y1).